The primary structure comprises 207 residues: Large ribosomal subunit protein uL4 (207 aa).

Residues 49–78 (HAVKNRSAVSGGGRKPWRQKGTGRARQGSI) form a disordered region.

Belongs to the universal ribosomal protein uL4 family. In terms of assembly, part of the 50S ribosomal subunit.

Its function is as follows. One of the primary rRNA binding proteins, this protein initially binds near the 5'-end of the 23S rRNA. It is important during the early stages of 50S assembly. It makes multiple contacts with different domains of the 23S rRNA in the assembled 50S subunit and ribosome. In terms of biological role, forms part of the polypeptide exit tunnel. The protein is Large ribosomal subunit protein uL4 of Streptococcus pneumoniae serotype 2 (strain D39 / NCTC 7466).